Here is a 1736-residue protein sequence, read N- to C-terminus: Centrosomal protein of 152 kDa (1736 aa).

Residues 1–60 (MSLEFGSVALQTQNEDEEFDKEDFEREKELQQLLTDLPHDMLDDELSSPERHDSDCSMDG) form an interaction with PLK4 region. The disordered stretch occupies residues 1-127 (MSLEFGSVAL…SGYSPPGKRE (127 aa)). Basic and acidic residues-rich tracts occupy residues 61 to 82 (RAAE…DILP) and 94 to 105 (EENRSKTEDQHL). Coiled coils occupy residues 228 to 481 (IIQL…AELG), 552 to 651 (HLVS…QEFD), 692 to 776 (LEVY…TERQ), 835 to 868 (AAVS…ALRK), 950 to 1075 (NVMS…YEED), and 1205 to 1315 (GHCF…KIKR). Positions 571-592 (FQQSKDGDSGMETKTDTSEKTT) are disordered. The segment covering 575-592 (KDGDSGMETKTDTSEKTT) has biased composition (basic and acidic residues). Thr-1277 carries the phosphothreonine modification. Disordered stretches follow at residues 1416 to 1479 (GTER…ASTA), 1543 to 1562 (EKNS…LRSP), 1574 to 1614 (GSPT…SDST), and 1677 to 1736 (QQGK…SPLE). Residues 1462–1473 (RRLEESKHREMR) are compositionally biased toward basic and acidic residues. Polar residues-rich tracts occupy residues 1576 to 1595 (PTET…SQDS) and 1603 to 1614 (PSSSPAWPSDST). An N6-acetyllysine modification is found at Lys-1714.

It belongs to the CEP152 family. In terms of assembly, interacts (via N-terminus) with PLK4; the interaction is mutally exclusive with a PLK4:CEP192 interaction. Interacts (via C-terminus) with CPAP (via-N-terminus). Interacts with CINP. Interacts with CDK5RAP2, WDR62, CEP63 and CEP131. CEP63, CDK5RAP2, CEP152, WDR62 are proposed to form a stepwise assembled complex at the centrosome forming a ring near parental centrioles. Interacts with DEUP1; this interaction recruits CEP152 to the deuterosome. The interactions with CEP63 and DEUP1 are mutually exclusive. Interacts with CCDC66.

Its subcellular location is the cytoplasm. The protein localises to the cytoskeleton. The protein resides in the microtubule organizing center. It is found in the centrosome. It localises to the centriole. Functionally, necessary for centrosome duplication; the function also seems to involve CEP63, CDK5RAP2 and WDR62 through a stepwise assembled complex at the centrosome that recruits CDK2 required for centriole duplication. Acts as a molecular scaffold facilitating the interaction of PLK4 and CPAP, 2 molecules involved in centriole formation. Proposed to snatch PLK4 away from PLK4:CEP92 complexes in early G1 daughter centriole and to reposition PLK4 at the outer boundary of a newly forming CEP152 ring structure. Also plays a key role in deuterosome-mediated centriole amplification in multiciliated that can generate more than 100 centrioles. Overexpression of cep152 can drive amplification of centrioles. This chain is Centrosomal protein of 152 kDa (Cep152), found in Mus musculus (Mouse).